The primary structure comprises 354 residues: MNQLKNDRYLKALLREPVDMTPVWMMRQAGRYLPEYKATRAEAGDFMALCRNADLACEVTLQPLRRYALDAAILFSDILTVPDAMGLGLSFGAGEGPKFARPIENKAQVDNLPIPDPESELQYVMNAVRTIRRELKGEVPLIGFSGSPWTLATYMVEGGSSKAFTKIKKMMYADPKILHALLDKLADSVILYLNAQIKAGAQAVMVFDTWGGVLAHNEYKEFSLRYMHKIVDGLIRENEGRKVPVTLFTKGGGLWLEAIAETGCDAVGLDWTVDIADARRRVGHKVALQGNMDPSVLYAQPERIELEVKQILAGFGQGSGHVFNLGHGIHQDVPEQSPKVFVDAVHEYSKQYHK.

Substrate contacts are provided by residues 27 to 31, aspartate 77, tyrosine 154, threonine 209, and histidine 327; that span reads RQAGR.

It belongs to the uroporphyrinogen decarboxylase family. As to quaternary structure, homodimer.

Its subcellular location is the cytoplasm. The enzyme catalyses uroporphyrinogen III + 4 H(+) = coproporphyrinogen III + 4 CO2. It functions in the pathway porphyrin-containing compound metabolism; protoporphyrin-IX biosynthesis; coproporphyrinogen-III from 5-aminolevulinate: step 4/4. Its function is as follows. Catalyzes the decarboxylation of four acetate groups of uroporphyrinogen-III to yield coproporphyrinogen-III. The polypeptide is Uroporphyrinogen decarboxylase (Actinobacillus pleuropneumoniae serotype 5b (strain L20)).